A 307-amino-acid chain; its full sequence is Malate dehydrogenase (307 aa).

NAD(+)-binding positions include 8–13 (GAGNVG) and Asp32. Residues Arg81 and Arg87 each coordinate substrate. NAD(+) is bound by residues Asn94 and 117 to 119 (VSN). The substrate site is built by Asn119 and Arg150. His174 serves as the catalytic Proton acceptor.

It belongs to the LDH/MDH superfamily. MDH type 3 family.

It carries out the reaction (S)-malate + NAD(+) = oxaloacetate + NADH + H(+). Catalyzes the reversible oxidation of malate to oxaloacetate. This is Malate dehydrogenase from Dehalococcoides mccartyi (strain CBDB1).